We begin with the raw amino-acid sequence, 666 residues long: SNARE-interacting protein KEULE (666 aa).

The stretch at 340–377 forms a coiled coil; sequence KNKAAQLQGKRDGAELSTRDLQKMVQALPQYSEQIDKL. A disordered region spans residues 534–589; it reads KEDFPCMNDPSPSFHGSTSLSSAASSSQGQAAQSMRSRRTPTWAKPRGSDDGYSSD. The segment covering 550–568 has biased composition (low complexity); the sequence is STSLSSAASSSQGQAAQSM.

This sequence belongs to the STXBP/unc-18/SEC1 family. In terms of assembly, binds the syntaxin KNOLLE. Interacts with SEC6. Expressed throughout the plant, both in mitotically active and quiescent cells. Enriched in dividing tissues.

Its subcellular location is the cytoplasm. It is found in the membrane. It localises to the cytoskeleton. The protein localises to the phragmoplast. Its function is as follows. Regulator of vesicle trafficking involved in cytokinesis and root hair development, but not required for cell elongation. In Arabidopsis thaliana (Mouse-ear cress), this protein is SNARE-interacting protein KEULE (KEU).